Here is a 642-residue protein sequence, read N- to C-terminus: MDNREALKTFMTGENFYLQHYLGAHREELNGEHGYTFRVWAPNAQAVHLVGDFTNWIENQIPMVRNDFGVWEVFTNMAQEGHIYKYHVTRQNGHQLMKIDPFAVRYEARPGTGAIVTELPEKKWKDGLWLARRKRWGFAERPVNIYEVHAGSWKRNPDGSPYSFAQLKDELIPYLVEMNYTHIEFMPLMSHPLGLSWGYQLMGYFALEHAYGRPEEFQDFVEECHTHNIGVIVDWVPGHFTINDDALAYYDGTPTFEYQDHNKAHNHGWGALNFDLGKNEVQSFLISCIKHWIDVYHLDGIRVDAVSNMLYLDYDDAPWTPNKDGGNLNYEGYYFLQRLNEVIKLEYPDVMMIAEESSSATKITGMKEIGGLGFDYKWNMGWMNDILRFYEEDPIYRKYDFNLVTFSFMYVFKENYLLPFSHDEVVHGKKSMMHKMWGDRYNQFAGLRNLYTYQICHPGKKLLFMGSEYGQFLEWKSEEQLEWSNLEDPMNAKMKYFTSQLNQFYKDHRCLWEIDTSYDGIEIIDADNRDQSVLSFIRKGKKGEMLVCIFNMVPVERKDFTIGLPVAGIYEEVWNTELEEWGGVWKEHNQTVQTQEGLWKDYEQTLTFTLPAMGASVWKIKRRLKSTKTVTNKNPKGVENEK.

Residue D304 is the Nucleophile of the active site. E355 serves as the catalytic Proton donor.

Belongs to the glycosyl hydrolase 13 family. GlgB subfamily. In terms of assembly, monomer.

The catalysed reaction is Transfers a segment of a (1-&gt;4)-alpha-D-glucan chain to a primary hydroxy group in a similar glucan chain.. It participates in glycan biosynthesis; glycogen biosynthesis. Its function is as follows. Catalyzes the formation of the alpha-1,6-glucosidic linkages in glycogen by scission of a 1,4-alpha-linked oligosaccharide from growing alpha-1,4-glucan chains and the subsequent attachment of the oligosaccharide to the alpha-1,6 position. The chain is 1,4-alpha-glucan branching enzyme GlgB from Streptococcus pneumoniae serotype 2 (strain D39 / NCTC 7466).